The chain runs to 273 residues: Phosphonates import ATP-binding protein PhnC (273 aa).

Residues 2 to 245 (LRIDKLTKRF…VAREIYGADA (244 aa)) form the ABC transporter domain. 34–41 (GRSGAGKS) is a binding site for ATP.

This sequence belongs to the ABC transporter superfamily. Phosphonates importer (TC 3.A.1.9.1) family. As to quaternary structure, the complex is composed of two ATP-binding proteins (PhnC), two transmembrane proteins (PhnE) and a solute-binding protein (PhnD).

It localises to the cell inner membrane. The catalysed reaction is phosphonate(out) + ATP + H2O = phosphonate(in) + ADP + phosphate + H(+). Functionally, part of the ABC transporter complex PhnCDE involved in phosphonates import. Responsible for energy coupling to the transport system. The polypeptide is Phosphonates import ATP-binding protein PhnC (Ruegeria pomeroyi (strain ATCC 700808 / DSM 15171 / DSS-3) (Silicibacter pomeroyi)).